Here is a 320-residue protein sequence, read N- to C-terminus: ATP-dependent 6-phosphofructokinase isozyme 1 (320 aa).

Gly12 serves as a coordination point for ATP. ADP contacts are provided by residues 22-26 (RGVVR) and 55-60 (RYSVSD). ATP contacts are provided by residues 73–74 (RF) and 103–106 (GDGS). Asp104 lines the Mg(2+) pocket. 126-128 (TID) provides a ligand contact to substrate. Asp128 serves as the catalytic Proton acceptor. Residue Arg155 coordinates ADP. Substrate contacts are provided by residues Arg163 and 170-172 (MGR). ADP is bound by residues 186–188 (GCE), Lys212, and 214–216 (KKH). Residues Glu223, Arg244, and 250–253 (HIQR) each bind substrate.

It belongs to the phosphofructokinase type A (PFKA) family. ATP-dependent PFK group I subfamily. Prokaryotic clade 'B1' sub-subfamily. As to quaternary structure, homotetramer. The cofactor is Mg(2+).

It localises to the cytoplasm. The catalysed reaction is beta-D-fructose 6-phosphate + ATP = beta-D-fructose 1,6-bisphosphate + ADP + H(+). It functions in the pathway carbohydrate degradation; glycolysis; D-glyceraldehyde 3-phosphate and glycerone phosphate from D-glucose: step 3/4. Allosterically activated by ADP and other diphosphonucleosides, and allosterically inhibited by phosphoenolpyruvate. Its function is as follows. Catalyzes the phosphorylation of D-fructose 6-phosphate to fructose 1,6-bisphosphate by ATP, the first committing step of glycolysis. This chain is ATP-dependent 6-phosphofructokinase isozyme 1, found in Escherichia coli O6:H1 (strain CFT073 / ATCC 700928 / UPEC).